Reading from the N-terminus, the 134-residue chain is Beta-synuclein (134 aa).

A run of 2 repeats spans residues 20–30 and 31–41. Residues 20 to 67 are 4 X 11 AA tandem repeats of [EGS]-K-T-K-[EQ]-[GQ]-V-X(4); sequence EKTKQGVTEAAEKTKEGVLYVGSKTKEGVVQGVASVAEKTKEQASHLG. Residues 42–56 form a 3; approximate repeat; the sequence is SKTKEGVVQGVASVA. Repeat unit 4 spans residues 57–67; sequence EKTKEQASHLG. The tract at residues 97-134 is disordered; it reads EVAQEAAEEPLIEPLMEPEGESYEEQPQEEYQEYEPEA. Residues 98–134 show a composition bias toward acidic residues; it reads VAQEAAEEPLIEPLMEPEGESYEEQPQEEYQEYEPEA. The residue at position 118 (Ser-118) is a Phosphoserine; by BARK1, CK2 and GRK5.

Belongs to the synuclein family. In terms of processing, phosphorylated. Phosphorylation by G-protein coupled receptor kinases (GRK) is more efficient than phosphorylation by CK1, CK2 and CaM-kinase II. As to expression, specifically present in synapses around neurons but not in glial cells.

The protein localises to the cytoplasm. Its function is as follows. May be involved in neuronal plasticity. This Bos taurus (Bovine) protein is Beta-synuclein (SNCB).